The following is a 77-amino-acid chain: Putative defensin-like protein 118 (77 aa).

The signal sequence occupies residues 1–25; the sequence is MSKSTILAIFMIVLVLGKVTKETQG. Cystine bridges form between Cys-29–Cys-75, Cys-39–Cys-58, Cys-44–Cys-69, and Cys-48–Cys-71.

Belongs to the DEFL family.

Its subcellular location is the secreted. The polypeptide is Putative defensin-like protein 118 (LCR52) (Arabidopsis thaliana (Mouse-ear cress)).